Here is a 196-residue protein sequence, read N- to C-terminus: Shikimate kinase (196 aa).

Position 21–26 (21–26) interacts with ATP; sequence GTGKSR. Position 25 (serine 25) interacts with Mg(2+). Residues aspartate 43, arginine 67, and glycine 89 each coordinate substrate. Arginine 126 is a binding site for ATP. Arginine 145 contacts substrate. Residue arginine 161 participates in ATP binding.

It belongs to the shikimate kinase family. In terms of assembly, monomer. It depends on Mg(2+) as a cofactor.

The protein resides in the cytoplasm. It catalyses the reaction shikimate + ATP = 3-phosphoshikimate + ADP + H(+). Its pathway is metabolic intermediate biosynthesis; chorismate biosynthesis; chorismate from D-erythrose 4-phosphate and phosphoenolpyruvate: step 5/7. Its function is as follows. Catalyzes the specific phosphorylation of the 3-hydroxyl group of shikimic acid using ATP as a cosubstrate. In Deinococcus radiodurans (strain ATCC 13939 / DSM 20539 / JCM 16871 / CCUG 27074 / LMG 4051 / NBRC 15346 / NCIMB 9279 / VKM B-1422 / R1), this protein is Shikimate kinase.